The following is a 139-amino-acid chain: Flagellar basal body rod protein FlgB (139 aa).

Belongs to the flagella basal body rod proteins family. The basal body constitutes a major portion of the flagellar organelle and consists of a number of rings mounted on a central rod. In Gram-negative bacteria, at least four rings, L, P, S and M are present, whereas Gram-positive bacteria lack the L and P rings. The rod consists of about 26 subunits of FlgG in the distal portion, and FlgB, FlgC and FlgF build up the proximal portion of the rod with about 6 subunits each. Rod assembly occurs by export via the flagellum-specific pathway of its constituent proteins and by their incorporation into the rod structure in the probable order of FlgB, FlgC, FlgF and FlgG. Another protein, FliE, also assembles onto the stable rod structure.

The protein resides in the bacterial flagellum basal body. Its function is as follows. Structural component of flagellum, the bacterial motility apparatus. Part of the rod structure of flagellar basal body. This chain is Flagellar basal body rod protein FlgB, found in Proteus mirabilis.